The sequence spans 157 residues: Transmembrane protein 50A (157 aa).

Ser-2 bears the N-acetylserine mark. The residue at position 2 (Ser-2) is a Phosphoserine. The next 4 membrane-spanning stretches (helical) occupy residues 26–46, 58–78, 95–115, and 126–146; these read IAAG…AVMY, TCGV…NGQV, IWLF…MWIL, and VVYP…GGLV.

Belongs to the UPF0220 family.

The protein localises to the membrane. In Mus musculus (Mouse), this protein is Transmembrane protein 50A (Tmem50a).